A 235-amino-acid polypeptide reads, in one-letter code: Enolase-phosphatase E1 (235 aa).

Belongs to the HAD-like hydrolase superfamily. MasA/MtnC family. As to quaternary structure, monomer. Requires Mg(2+) as cofactor.

The catalysed reaction is 5-methylsulfanyl-2,3-dioxopentyl phosphate + H2O = 1,2-dihydroxy-5-(methylsulfanyl)pent-1-en-3-one + phosphate. It participates in amino-acid biosynthesis; L-methionine biosynthesis via salvage pathway; L-methionine from S-methyl-5-thio-alpha-D-ribose 1-phosphate: step 3/6. The protein operates within amino-acid biosynthesis; L-methionine biosynthesis via salvage pathway; L-methionine from S-methyl-5-thio-alpha-D-ribose 1-phosphate: step 4/6. Its function is as follows. Bifunctional enzyme that catalyzes the enolization of 2,3-diketo-5-methylthiopentyl-1-phosphate (DK-MTP-1-P) into the intermediate 2-hydroxy-3-keto-5-methylthiopentenyl-1-phosphate (HK-MTPenyl-1-P), which is then dephosphorylated to form the acireductone 1,2-dihydroxy-3-keto-5-methylthiopentene (DHK-MTPene). The chain is Enolase-phosphatase E1 from Parvibaculum lavamentivorans (strain DS-1 / DSM 13023 / NCIMB 13966).